Reading from the N-terminus, the 721-residue chain is Fatty acid oxidation complex subunit alpha (721 aa).

Residues 1-190 form an enoyl-CoA hydratase/isomerase region; the sequence is MIYEGKAITV…KVGVVDAIVA (190 aa). Asp297 lines the substrate pocket. The segment at 312-721 is 3-hydroxyacyl-CoA dehydrogenase; the sequence is RDVKQAAVLG…SFFGQASSEV (410 aa). Residues Met325, Asp344, 401–403, Lys408, and Ser430 each bind NAD(+); that span reads VVE. The active-site For 3-hydroxyacyl-CoA dehydrogenase activity is His451. Asn454 contributes to the NAD(+) binding site. Residues Asn501 and Tyr660 each coordinate substrate.

It in the N-terminal section; belongs to the enoyl-CoA hydratase/isomerase family. This sequence in the C-terminal section; belongs to the 3-hydroxyacyl-CoA dehydrogenase family. As to quaternary structure, heterotetramer of two alpha chains (FadB) and two beta chains (FadA).

It carries out the reaction a (3S)-3-hydroxyacyl-CoA + NAD(+) = a 3-oxoacyl-CoA + NADH + H(+). The enzyme catalyses a (3S)-3-hydroxyacyl-CoA = a (2E)-enoyl-CoA + H2O. It catalyses the reaction a 4-saturated-(3S)-3-hydroxyacyl-CoA = a (3E)-enoyl-CoA + H2O. The catalysed reaction is (3S)-3-hydroxybutanoyl-CoA = (3R)-3-hydroxybutanoyl-CoA. It carries out the reaction a (3Z)-enoyl-CoA = a 4-saturated (2E)-enoyl-CoA. The enzyme catalyses a (3E)-enoyl-CoA = a 4-saturated (2E)-enoyl-CoA. Its pathway is lipid metabolism; fatty acid beta-oxidation. Functionally, involved in the aerobic and anaerobic degradation of long-chain fatty acids via beta-oxidation cycle. Catalyzes the formation of 3-oxoacyl-CoA from enoyl-CoA via L-3-hydroxyacyl-CoA. It can also use D-3-hydroxyacyl-CoA and cis-3-enoyl-CoA as substrate. This Pseudomonas syringae pv. tomato (strain ATCC BAA-871 / DC3000) protein is Fatty acid oxidation complex subunit alpha.